The sequence spans 294 residues: Elongation factor Ts (294 aa).

Positions 81–84 (TDFV) are involved in Mg(2+) ion dislocation from EF-Tu.

The protein belongs to the EF-Ts family.

It is found in the cytoplasm. Associates with the EF-Tu.GDP complex and induces the exchange of GDP to GTP. It remains bound to the aminoacyl-tRNA.EF-Tu.GTP complex up to the GTP hydrolysis stage on the ribosome. The protein is Elongation factor Ts of Levilactobacillus brevis (strain ATCC 367 / BCRC 12310 / CIP 105137 / JCM 1170 / LMG 11437 / NCIMB 947 / NCTC 947) (Lactobacillus brevis).